We begin with the raw amino-acid sequence, 318 residues long: D-alanine--D-alanine ligase B (318 aa).

Residues 117-315 (KQVWLSLGLS…FEALVWRVLE (199 aa)) enclose the ATP-grasp domain. 146-201 (AEQIGLPVIVKPANEGSSVGVSRVFDQAQLDEAVTLAARYDGALLMEQLIEGDELT) is a binding site for ATP. 3 residues coordinate Mg(2+): aspartate 268, glutamate 282, and asparagine 284.

This sequence belongs to the D-alanine--D-alanine ligase family. Requires Mg(2+) as cofactor. Mn(2+) is required as a cofactor.

Its subcellular location is the cytoplasm. The enzyme catalyses 2 D-alanine + ATP = D-alanyl-D-alanine + ADP + phosphate + H(+). It functions in the pathway cell wall biogenesis; peptidoglycan biosynthesis. Its function is as follows. Cell wall formation. The polypeptide is D-alanine--D-alanine ligase B (Xanthomonas campestris pv. campestris (strain ATCC 33913 / DSM 3586 / NCPPB 528 / LMG 568 / P 25)).